The following is a 194-amino-acid chain: ATP-dependent Clp protease proteolytic subunit (194 aa).

S99 acts as the Nucleophile in catalysis. Residue H124 is part of the active site.

It belongs to the peptidase S14 family. Fourteen ClpP subunits assemble into 2 heptameric rings which stack back to back to give a disk-like structure with a central cavity, resembling the structure of eukaryotic proteasomes.

The protein resides in the cytoplasm. It carries out the reaction Hydrolysis of proteins to small peptides in the presence of ATP and magnesium. alpha-casein is the usual test substrate. In the absence of ATP, only oligopeptides shorter than five residues are hydrolyzed (such as succinyl-Leu-Tyr-|-NHMec, and Leu-Tyr-Leu-|-Tyr-Trp, in which cleavage of the -Tyr-|-Leu- and -Tyr-|-Trp bonds also occurs).. In terms of biological role, cleaves peptides in various proteins in a process that requires ATP hydrolysis. Has a chymotrypsin-like activity. Plays a major role in the degradation of misfolded proteins. The polypeptide is ATP-dependent Clp protease proteolytic subunit (Borrelia garinii subsp. bavariensis (strain ATCC BAA-2496 / DSM 23469 / PBi) (Borreliella bavariensis)).